A 76-amino-acid chain; its full sequence is ATP synthase subunit 9, mitochondrial (76 aa).

Position 1 is an N-formylmethionine (Met1). 2 helical membrane passes run 14–34 (LASI…AALI) and 52–72 (ILGF…AFLL).

In terms of assembly, F-type ATP synthases have 2 components, the catalytic core F(1) and the membrane-embedded component F(0), linked together by a central stalk and a peripheral stalk. The central stalk, also called rotor shaft, is often seen as part of F(1). The peripheral stalk is seen as part of F(0). F(0) contains the membrane channel next to the rotor. F-type ATP synthases form dimers but each monomer functions independently in ATP generation. The dimer consists of 17 different polypeptides: ATP1 (subunit alpha, 3 molecules per monomer, part of F(1)), ATP2 (subunit beta, 3 copies per monomer, part of F(1)), ATP3 (subunit gamma, part of the central stalk), ATP4 (subunit b, part of the peripheral stalk), ATP5/OSCP (subunit 5/OSCP, part of the peripheral stalk), ATP6 (subunit a, part of the peripheral stalk), ATP7 (subunit d, part of the peripheral stalk), ATP8 (subunit 8, part of the peripheral stalk), OLI1 (subunit c, part of the rotor, 10 molecules per monomer), ATP14 (subunit h, part of the peripheral stalk), ATP15 (subunit epsilon, part of the central stalk), ATP16 (subunit delta, part of the central stalk), ATP17 (subunit f, part of the peripheral stalk), ATP18 (subunit i/j, part of the peripheral stalk), ATP19 (subunit k, dimer-specific, at interface between monomers), ATP20 (subunit g, at interface between monomers), TIM11 (subunit e, at interface between monomers).

Its subcellular location is the mitochondrion inner membrane. Mitochondrial membrane ATP synthase (F(1)F(0) ATP synthase or Complex V) produces ATP from ADP in the presence of a proton gradient across the membrane which is generated by electron transport complexes of the respiratory chain. F-type ATP synthases consist of two structural domains, F(1) - containing the extramembraneous catalytic core, and F(0) - containing the membrane proton channel, linked together by a central stalk and a peripheral stalk. During catalysis, ATP synthesis in the catalytic domain of F(1) is coupled via a rotary mechanism of the central stalk subunits to proton translocation. Part of the complex F(0) domain. A homomeric c-ring of 10 OLI1/ATP9 subunits is part of the complex rotary element. The chain is ATP synthase subunit 9, mitochondrial from Yarrowia lipolytica (strain CLIB 122 / E 150) (Yeast).